The sequence spans 995 residues: Protein translocase subunit SecA (995 aa).

ATP is bound by residues glutamine 86, 104–108 (GEGKT), and aspartate 535. The tract at residues 883-911 (AQTVSSDGNGEVVRKPQRRSTPQIGRNEL) is disordered. 4 residues coordinate Zn(2+): cysteine 912, cysteine 914, cysteine 923, and histidine 924. The tract at residues 939-995 (PSAPPASKALKSTPATQTAVAEEAAKIQAAINSGKLPPTQTTPRGRQAPSVPRGKKR) is disordered. A compositionally biased stretch (low complexity) spans 957–969 (AVAEEAAKIQAAI).

It belongs to the SecA family. In terms of assembly, monomer and homodimer. Part of the essential Sec protein translocation apparatus which comprises SecA, SecYEG and auxiliary proteins SecDF. Other proteins may also be involved. Zn(2+) serves as cofactor.

Its subcellular location is the cell membrane. The protein localises to the cytoplasm. The catalysed reaction is ATP + H2O + cellular proteinSide 1 = ADP + phosphate + cellular proteinSide 2.. Functionally, part of the Sec protein translocase complex. Interacts with the SecYEG preprotein conducting channel. Has a central role in coupling the hydrolysis of ATP to the transfer of proteins into and across the cell membrane, serving as an ATP-driven molecular motor driving the stepwise translocation of polypeptide chains across the membrane. In Chloroflexus aurantiacus (strain ATCC 29366 / DSM 635 / J-10-fl), this protein is Protein translocase subunit SecA.